The sequence spans 206 residues: uncharacterized protein (206 aa).

This is an uncharacterized protein from Citrus psorosis virus (isolate Spain/P-121) (CPsV).